A 364-amino-acid polypeptide reads, in one-letter code: DNA replication and repair protein RecF (364 aa).

30–37 provides a ligand contact to ATP; that stretch reads GENGSGKT.

The protein belongs to the RecF family.

Its subcellular location is the cytoplasm. The RecF protein is involved in DNA metabolism; it is required for DNA replication and normal SOS inducibility. RecF binds preferentially to single-stranded, linear DNA. It also seems to bind ATP. This Xylella fastidiosa (strain M12) protein is DNA replication and repair protein RecF.